The following is a 240-amino-acid chain: 4-hydroxy-tetrahydrodipicolinate reductase (240 aa).

NAD(+) is bound by residues 8 to 13 (GSTGKM), 78 to 80 (GTT), and 102 to 105 (SANM). Histidine 134 serves as the catalytic Proton donor/acceptor. Histidine 135 provides a ligand contact to (S)-2,3,4,5-tetrahydrodipicolinate. Lysine 138 serves as the catalytic Proton donor. 144–145 (GT) contributes to the (S)-2,3,4,5-tetrahydrodipicolinate binding site.

Belongs to the DapB family.

Its subcellular location is the cytoplasm. It carries out the reaction (S)-2,3,4,5-tetrahydrodipicolinate + NAD(+) + H2O = (2S,4S)-4-hydroxy-2,3,4,5-tetrahydrodipicolinate + NADH + H(+). The enzyme catalyses (S)-2,3,4,5-tetrahydrodipicolinate + NADP(+) + H2O = (2S,4S)-4-hydroxy-2,3,4,5-tetrahydrodipicolinate + NADPH + H(+). It functions in the pathway amino-acid biosynthesis; L-lysine biosynthesis via DAP pathway; (S)-tetrahydrodipicolinate from L-aspartate: step 4/4. Functionally, catalyzes the conversion of 4-hydroxy-tetrahydrodipicolinate (HTPA) to tetrahydrodipicolinate. In Rickettsia canadensis (strain McKiel), this protein is 4-hydroxy-tetrahydrodipicolinate reductase.